A 765-amino-acid chain; its full sequence is Membrane metallo-endopeptidase-like 1 (765 aa).

At 1–19 (MVERAGWCRKKSPGFVEYG) the chain is on the cytoplasmic side. The chain crosses the membrane as a helical; Signal-anchor for type II membrane protein span at residues 20 to 40 (LMVLLLLLLGAIVTLGVFYSI). Residues 41 to 765 (GKQLPLLTSL…MHPMKRCRIW (725 aa)) lie on the Lumenal side of the membrane. Residues 74–765 (ICTTPSCVIA…MHPMKRCRIW (692 aa)) form the Peptidase M13 domain. Intrachain disulfides connect Cys75-Cys80, Cys98-Cys750, Cys106-Cys710, Cys161-Cys425, and Cys636-Cys762. Arg121 lines the a peptide pocket. Asn163, Asn279, Asn303, and Asn336 each carry an N-linked (GlcNAc...) asparagine glycan. Residues 523–549 (FENGLQNLKNNAQRSLKKLREKVDQNL) are a coiled coil. His599 provides a ligand contact to Zn(2+). Residue Glu600 is part of the active site. Zn(2+) is bound by residues His603 and Glu662. Catalysis depends on Asp666, which acts as the Proton donor. Asn694 is a glycosylation site (N-linked (GlcNAc...) asparagine).

This sequence belongs to the peptidase M13 family. The cofactor is Zn(2+). In terms of processing, N-glycosylated. Highly expressed in testis. Also expressed in ovary. Weakly or not expressed in brain, lung, heart, liver, kidney, adrenal gland and intestine.

Its subcellular location is the membrane. The protein resides in the secreted. It catalyses the reaction Preferential cleavage of polypeptides between hydrophobic residues, particularly with Phe or Tyr at P1'.. Inhibited by thiorphan and phosphoramidon. Metalloprotease involved in sperm function, possibly by modulating the processes of fertilization and early embryonic development. Degrades a broad variety of small peptides with a preference for peptides shorter than 3 kDa containing neutral bulky aliphatic or aromatic amino acid residues. Shares the same substrate specificity with MME and cleaves peptides at the same amide bond. This is Membrane metallo-endopeptidase-like 1 (Mmel1) from Mus musculus (Mouse).